The primary structure comprises 465 residues: Argininosuccinate lyase (465 aa).

It belongs to the lyase 1 family. Argininosuccinate lyase subfamily.

The protein localises to the cytoplasm. The catalysed reaction is 2-(N(omega)-L-arginino)succinate = fumarate + L-arginine. It functions in the pathway amino-acid biosynthesis; L-arginine biosynthesis; L-arginine from L-ornithine and carbamoyl phosphate: step 3/3. In Aromatoleum aromaticum (strain DSM 19018 / LMG 30748 / EbN1) (Azoarcus sp. (strain EbN1)), this protein is Argininosuccinate lyase.